The primary structure comprises 100 residues: MEEAQPKLEKLEKFEYFLVNKLEEKIKETLIVENEVVRIVMIQRPIYDPFDKKFHTRGLLKIGKKYYTIVIEASKYFIFIKSKPIYLRIGWDELEEGEKQ.

This is an uncharacterized protein from Acidianus convivator (ATV).